We begin with the raw amino-acid sequence, 226 residues long: MEHRVFTIANFFSSNHDFITGFFVVLTAVLMFFISLGASRKMQMVPMGLQNVYESIISAILSVAKDIIGEELARKYFPLAGTIALYVFFSNMIGIIPGFESPTASWSFTLVLALIVFFYYHFEGIRVQGFFKYFAHFAGPVKWLAPFMFPIEIISHFSRIVSLSFRLFGNIKGDDMFLLIMLLLVPWAVPVAPFMVLFFMGILQAFVFMILTYVYLAGAVLTDEGH.

6 consecutive transmembrane segments (helical) span residues 18–38 (FITGFFVVLTAVLMFFISLGA), 79–99 (LAGTIALYVFFSNMIGIIPGF), 105–125 (SWSFTLVLALIVFFYYHFEGI), 134–154 (FAHFAGPVKWLAPFMFPIEII), 179–199 (LIMLLLVPWAVPVAPFMVLFF), and 201–221 (GILQAFVFMILTYVYLAGAVL).

This sequence belongs to the ATPase A chain family. In terms of assembly, F-type ATPases have 2 components, CF(1) - the catalytic core - and CF(0) - the membrane proton channel. CF(1) has five subunits: alpha(3), beta(3), gamma(1), delta(1), epsilon(1). CF(0) has three main subunits: a(1), b(2) and c(9-12). The alpha and beta chains form an alternating ring which encloses part of the gamma chain. CF(1) is attached to CF(0) by a central stalk formed by the gamma and epsilon chains, while a peripheral stalk is formed by the delta and b chains.

It localises to the cell inner membrane. Its function is as follows. Key component of the proton channel; it plays a direct role in the translocation of protons across the membrane. The sequence is that of ATP synthase subunit a from Helicobacter pylori (strain J99 / ATCC 700824) (Campylobacter pylori J99).